The chain runs to 291 residues: 33 kDa chaperonin (291 aa).

Disulfide bonds link cysteine 235-cysteine 237 and cysteine 268-cysteine 271.

It belongs to the HSP33 family. In terms of processing, under oxidizing conditions two disulfide bonds are formed involving the reactive cysteines. Under reducing conditions zinc is bound to the reactive cysteines and the protein is inactive.

Its subcellular location is the cytoplasm. Functionally, redox regulated molecular chaperone. Protects both thermally unfolding and oxidatively damaged proteins from irreversible aggregation. Plays an important role in the bacterial defense system toward oxidative stress. The sequence is that of 33 kDa chaperonin from Bacillus velezensis (strain DSM 23117 / BGSC 10A6 / LMG 26770 / FZB42) (Bacillus amyloliquefaciens subsp. plantarum).